The chain runs to 218 residues: Oxygen regulatory protein NreC (218 aa).

In terms of domain architecture, Response regulatory spans 2–119 (KIVIADDHAV…QLILAVRTVY (118 aa)). 4-aspartylphosphate is present on Asp53. The region spanning 149–214 (SSDPFKILSK…ELVEYALKKK (66 aa)) is the HTH luxR-type domain. Positions 173 to 192 (NKDIAEKLFVSVKTVEAHKT) form a DNA-binding region, H-T-H motif.

In terms of processing, phosphorylated by NreB.

It localises to the cytoplasm. Functionally, member of the two-component regulatory system NreB/NreC involved in the control of dissimilatory nitrate/nitrite reduction in response to oxygen. Phosphorylated NreC binds to a GC-rich palindromic sequence at the promoters of the nitrate (narGHJI) and nitrite (nir) reductase operons, as well as the putative nitrate transporter gene narT, and activates their expression. This Staphylococcus epidermidis (strain ATCC 12228 / FDA PCI 1200) protein is Oxygen regulatory protein NreC (nreC).